The primary structure comprises 736 residues: Copper-exporting P-type ATPase (736 aa).

Basic residues predominate over residues 1 to 17 (MKHDHHQGHTHSGKGHA). Residues 1 to 32 (MKHDHHQGHTHSGKGHACHHEHNSPKTQQASS) form a disordered region. 6 helical membrane passes run 85–105 (FWIA…GHGL), 114–134 (SSWI…WPFF), 149–169 (FTLI…AVLW), 183–203 (VVAV…LGQV), 341–361 (GWFV…WALL), and 369–389 (YGLI…LGLA). The active-site 4-aspartylphosphate intermediate is the aspartate 426. 3 residues coordinate Mg(2+): aspartate 426, threonine 428, and aspartate 624. The next 2 membrane-spanning stretches (helical) occupy residues 682 to 702 (LFFA…VLYP) and 706 to 726 (LLLS…SVII).

This sequence belongs to the cation transport ATPase (P-type) (TC 3.A.3) family. Type IB subfamily. Requires Mg(2+) as cofactor.

It is found in the cell inner membrane. The enzyme catalyses Cu(+)(in) + ATP + H2O = Cu(+)(out) + ADP + phosphate + H(+). Its activity is regulated as follows. Activated by phospholipids, Mg(2+) and Cu(+). In terms of biological role, couples the hydrolysis of ATP with the export of copper. The sequence is that of Copper-exporting P-type ATPase from Legionella pneumophila subsp. pneumophila (strain Philadelphia 1 / ATCC 33152 / DSM 7513).